Reading from the N-terminus, the 761-residue chain is Centrosomal protein of 85 kDa (761 aa).

Disordered stretches follow at residues 1 to 33 (MAMQ…TEWQ) and 95 to 117 (PSTL…SAKL). Residues 14–33 (ATSPGSNVIQKGSSLGTEWQ) show a composition bias toward polar residues. At S16 the chain carries Phosphoserine. S140 bears the Phosphoserine mark. Disordered regions lie at residues 226 to 279 (KAPG…GEQS) and 435 to 472 (KHSE…REKQ). Residues 256-432 (GLSKSLSSQV…QLIRESLKVT (177 aa)) are mediates interaction with NEK2 and is required for its function in the suppression of centrosome disjunction. Coiled-coil stretches lie at residues 333–656 (EHLL…RQAQ) and 723–749 (DVIR…LSDR). Positions 433-475 (LQKHSEEGKKQEERVKGRDKHINNLKKKCQKESEQNREKQQRI) are required for centrosome localization and for its function in the suppression of centrosome disjunction. Basic and acidic residues-rich tracts occupy residues 435–454 (KHSE…DKHI) and 462–472 (QKESEQNREKQ).

It belongs to the CEP85 family. As to quaternary structure, homodimer. Interacts with STIL (via N-terminus); this interaction is essential for robust PLK4 activation and efficient centriole assembly and for PLK4-dependent cell migration. Interacts with PLK4; required for CEP85 to be able to drive centriole duplication and cell migration.

It is found in the cytoplasm. Its subcellular location is the cytoskeleton. The protein localises to the microtubule organizing center. It localises to the centrosome. The protein resides in the spindle pole. It is found in the nucleus. Its subcellular location is the nucleolus. The protein localises to the centriole. It localises to the cell cortex. Acts as a regulator of centriole duplication through a direct interaction with STIL, a key factor involved in the early steps of centriole formation. The CEP85-STIL protein complex acts as a modulator of PLK4-driven cytoskeletal rearrangements and directional cell motility. Acts as a negative regulator of NEK2 to maintain the centrosome integrity in interphase. Suppresses centrosome disjunction by inhibiting NEK2 kinase activity. This chain is Centrosomal protein of 85 kDa (Cep85), found in Mus musculus (Mouse).